A 140-amino-acid chain; its full sequence is uncharacterized protein (140 aa).

An N-terminal signal peptide occupies residues 1-22; sequence MRLRWQTIVLLLLILGGASASA.

This is an uncharacterized protein from Archaeoglobus fulgidus (strain ATCC 49558 / DSM 4304 / JCM 9628 / NBRC 100126 / VC-16).